Here is a 448-residue protein sequence, read N- to C-terminus: Argininosuccinate synthase (448 aa).

Residues 17 to 25 (AFSGGLDTS) and alanine 43 contribute to the ATP site. An L-citrulline-binding site is contributed by tyrosine 99. ATP contacts are provided by glycine 129 and threonine 131. Residues threonine 131, asparagine 135, and aspartate 136 each contribute to the L-aspartate site. Residue asparagine 135 participates in L-citrulline binding. Aspartate 136 contacts ATP. The L-citrulline site is built by arginine 139 and serine 192. Residue aspartate 194 coordinates ATP. L-citrulline is bound by residues threonine 201, glutamate 203, and glutamate 280.

This sequence belongs to the argininosuccinate synthase family. Type 2 subfamily. In terms of assembly, homotetramer.

The protein resides in the cytoplasm. The catalysed reaction is L-citrulline + L-aspartate + ATP = 2-(N(omega)-L-arginino)succinate + AMP + diphosphate + H(+). It participates in amino-acid biosynthesis; L-arginine biosynthesis; L-arginine from L-ornithine and carbamoyl phosphate: step 2/3. The protein is Argininosuccinate synthase of Enterobacter sp. (strain 638).